A 450-amino-acid chain; its full sequence is Thiamine biosynthesis regulatory protein (450 aa).

Over residues 1–12 the composition is skewed to basic residues; the sequence is MVNSKRQQRSKK. A disordered region spans residues 1 to 23; that stretch reads MVNSKRQQRSKKVASSSKVPPTK. Low complexity predominate over residues 13–23; sequence VASSSKVPPTK. The zn(2)-C6 fungal-type DNA-binding region spans 30–57; it reads CWACRFKKRRCDENRPICSLCAKHGDNC. Residues 210 to 234 are disordered; sequence TDQLPSPGHSMSSAEETTTAALSSP.

It localises to the nucleus. Functionally, positive regulator of thiamine biosynthesis. The sequence is that of Thiamine biosynthesis regulatory protein (THI2) from Saccharomyces cerevisiae (strain ATCC 204508 / S288c) (Baker's yeast).